A 322-amino-acid chain; its full sequence is Sideroflexin-1 (322 aa).

N-acetylserine is present on Ser2. Topologically, residues 2–102 (SGELPPNINI…MSAQVPMNMT (101 aa)) are mitochondrial matrix. The helical transmembrane segment at 103–120 (ITGCMMTFYRTTPAVLFW) threads the bilayer. Residues 121-146 (QWINQSFNAVVNYTNRSGDAPLTVNE) are Mitochondrial intermembrane-facing. A helical transmembrane segment spans residues 147–167 (LGTAYVSATTGAVATALGLNA). The Mitochondrial matrix segment spans residues 168–174 (LTKHVSP). Residues 175 to 195 (LIGRFVPFAAVAAANCINIPL) traverse the membrane as a helical segment. Over 196–228 (MRQRELKVGIPVTDENGNRLGESANAAKQAITQ) the chain is Mitochondrial intermembrane. A helical transmembrane segment spans residues 229-249 (VVVSRILMAAPGMAIPPFIMN). At 250-266 (TLEKKAFLKRFPWMSAP) the chain is on the mitochondrial matrix side. Residues 267–287 (VQVGIVGFCLVFATPLCCALF) form a helical membrane-spanning segment. At 288–322 (PQKSSMSVTSLEAELQARIRETYPELRRVYFNKGL) the chain is on the mitochondrial intermembrane side.

The protein belongs to the sideroflexin family.

The protein localises to the mitochondrion inner membrane. The catalysed reaction is L-serine(in) = L-serine(out). The enzyme catalyses L-alanine(in) = L-alanine(out). It catalyses the reaction L-cysteine(in) = L-cysteine(out). Its function is as follows. Amino acid transporter importing serine, an essential substrate of the mitochondrial branch of the one-carbon pathway, into mitochondria. Mitochondrial serine is then converted to glycine and formate, which exits to the cytosol where it is used to generate the charged folates that serve as one-carbon donors. May also transport other amino acids including alanine and cysteine. This chain is Sideroflexin-1 (SFXN1), found in Bos taurus (Bovine).